Here is a 373-residue protein sequence, read N- to C-terminus: MATQAHSLSYAGCNFLRQRLVLSTLSGRPVKIRRIRARDDNPGLRDFEASFIRLLDKITNGSRIEINQTGTTLYYQPGLLYGGSVEHDCSVLRGIGYYLEALLCLAPFMKHPLKIVLRGVTNDQVDPSVDVLKATALPLLKQFGIDGESFELKILRRGMPPGGGGEVLFSCPVRKVLKPVQLTDPGKIKRIRGMAYSVRVSPQMANRIVDSARSILNKFIPDIYIYTDHMKGVSSGKSPGFGLSLVAETTNGTFLSAELASNPQGQGAAVLPEDLGRNCAKLLLEEIYRGGCVDSTNQSLVLLLMTLGQQDVSKVLLGPLSPYTIEFLRHLKSFFQVMFKVETKPCGEELKGGDKVLMTCVGIGFSNLSKTLK.

Belongs to the RNA 3'-terminal cyclase family. Type 2 subfamily. Part of the small subunit (SSU) processome, composed of more than 70 proteins and the RNA chaperone small nucleolar RNA (snoRNA) U3. Interacts with BMS1.

The protein localises to the nucleus. Its subcellular location is the nucleolus. In terms of biological role, as part of the small subunit (SSU) processome, it plays a role in 40S-ribosomal-subunit biogenesis in the early pre-rRNA processing steps at sites A0, A1 and A2 that are required for proper maturation of the 18S RNA. Activates BMS1 by promoting GDP/GTP exchange. Does not have cyclase activity. This Mus musculus (Mouse) protein is RNA 3'-terminal phosphate cyclase-like protein (Rcl1).